Reading from the N-terminus, the 61-residue chain is Small ribosomal subunit protein uS14 (61 aa).

Zn(2+) contacts are provided by Cys24, Cys27, Cys40, and Cys43.

This sequence belongs to the universal ribosomal protein uS14 family. Zinc-binding uS14 subfamily. Part of the 30S ribosomal subunit. Contacts proteins S3 and S10. The cofactor is Zn(2+).

Binds 16S rRNA, required for the assembly of 30S particles and may also be responsible for determining the conformation of the 16S rRNA at the A site. This chain is Small ribosomal subunit protein uS14, found in Anaeromyxobacter sp. (strain Fw109-5).